Reading from the N-terminus, the 364-residue chain is uncharacterized protein (364 aa).

This is an uncharacterized protein from Saccharum officinarum (Sugarcane).